The following is a 576-amino-acid chain: MDGTNNTIPLQFGKQAQTYDINALIARFIRPKESFLINSVEKESESKLNSKSTTLQSSDSEDWDSEENEDDITDVGVPGSHEIMFPGHSKIVTTTTFDKNGSRFYTGSLDNTIHCWDLNGLSATNPHPFKIIDPTDTNADNVGRYPVSKLSCSTKNQILALYTHSQPILYDRDGSLIVRFSKGDQYIRNMYNTKGHIAEITDGCWQPDSSQIFLTTGYDSTARIWDVNRTKSQLEVFVHVPEGSHTGLSRIPVTSCAWNPAKPDNFATAVLDGSIQFWQKGSRTKRPVMKIKDAHLPQQGISCLSFSQDGNYLLSRGEDNALRVWDLRNSNKCVNERIDILTPKAGGNAIFSPTQKLILAGSTAVNSMKAPLFVLDAMTLDTKATLFFDSKSTVTASVSAVSWNEKINQVSLGSADGNAYVLFSPNESIRGVKDAAMRPPKSKHIDDDLSSTVHINSLSGSAGTSDFGLVEETTESASAYFLEARRRRNAVRKDPKLSRQPQVGRLLEENSVDDIPLATMLNEDPREALLKYADVAKSNPMFTKMYSETQPTPIYQGVTEGDISSEEGNPSKKQKR.

Residues 41–78 are disordered; the sequence is EKESESKLNSKSTTLQSSDSEDWDSEENEDDITDVGVP. A compositionally biased stretch (low complexity) spans 49–58; it reads NSKSTTLQSS. The segment covering 59 to 73 has biased composition (acidic residues); sequence DSEDWDSEENEDDIT. WD repeat units follow at residues 87-126, 195-235, 248-288, 296-335, and 393-433; these read GHSK…ATNP, GHIA…SQLE, LSRI…KRPV, LPQQ…KCVN, and TVTA…RGVK. Residues 547 to 576 are disordered; the sequence is SETQPTPIYQGVTEGDISSEEGNPSKKQKR.

This is an uncharacterized protein from Schizosaccharomyces pombe (strain 972 / ATCC 24843) (Fission yeast).